A 329-amino-acid chain; its full sequence is MVKVAINGFGRIGRLVLRIALQRKALEVVAVNDPFISVDYAAYMFKYDSTHGRYKGEVTTSGNDLVIDGHKIAVFQEKDPANLPWGKLGVDIVIDSTGVFKELDSAQKHLDAGAKKVVITAPSKTAPMFVVGVNEDKYNGETIVSNASCTTNCLAPIAKIINDEFGIDEALMTTVHSITATQKTVDGPSHKDWRGGRTASGNIIPSSTGAAKAVGKVLPELQGKLTGMAFRVPTVDVSVVDLTVKLAKEATYDEIKAAVKKASQGKLKNVVGYTEDSVVSSDFLGDTHSTIFDASAGIQLSPKFVKVVAWYDNEYGYSERVVDLVEHVA.

Residues R11–I12, D33, and K78 contribute to the NAD(+) site. D-glyceraldehyde 3-phosphate is bound by residues S148–T150, T179, T208–G209, and R231. C149 serves as the catalytic Nucleophile. An NAD(+)-binding site is contributed by N313.

It belongs to the glyceraldehyde-3-phosphate dehydrogenase family. In terms of assembly, homotetramer.

The protein localises to the cytoplasm. The enzyme catalyses D-glyceraldehyde 3-phosphate + phosphate + NAD(+) = (2R)-3-phospho-glyceroyl phosphate + NADH + H(+). It participates in carbohydrate degradation; glycolysis; pyruvate from D-glyceraldehyde 3-phosphate: step 1/5. This chain is Glyceraldehyde-3-phosphate dehydrogenase 1 (GAP1), found in Kluyveromyces lactis (strain ATCC 8585 / CBS 2359 / DSM 70799 / NBRC 1267 / NRRL Y-1140 / WM37) (Yeast).